Reading from the N-terminus, the 743-residue chain is Glycerol dehydrogenase large subunit (743 aa).

The signal sequence occupies residues 1-24 (MRRSHLLATVACATLACAPLAANA). Over residues 27–41 (APAGSGGSPTSSVPG) the composition is skewed to low complexity. Disordered stretches follow at residues 27-115 (APAG…GHDD) and 445-474 (ILPVEERPAPSPGVIPGDPRSPTQPWSTGM).

It belongs to the bacterial PQQ dehydrogenase family. Requires pyrroloquinoline quinone as cofactor.

The protein resides in the secreted. The catalysed reaction is glycerol + A = dihydroxyacetone + AH2. Catalyzes the oxidation of glycerol to glycerone. Also acts, more slowly, on a number of other polyols including D-sorbitol, D-arabinitol, D-mannitol, meso-erythritol, adonitol and propylene glycol. In Gluconobacter oxydans (strain 621H) (Gluconobacter suboxydans), this protein is Glycerol dehydrogenase large subunit (sldA).